A 65-amino-acid polypeptide reads, in one-letter code: KappaPI-actitoxin-Ael3a (65 aa).

The BPTI/Kunitz inhibitor domain maps to 5-55 (CLLPKKQGFCRARFPRFYYNSSTRRCEMFYYGGCGGNANNFNTLEECEKVC). Disulfide bonds link Cys5–Cys55, Cys14–Cys38, and Cys30–Cys51.

This sequence belongs to the venom Kunitz-type family. Sea anemone type 2 potassium channel toxin subfamily.

Its subcellular location is the secreted. The protein localises to the nematocyst. Dual-function toxin that inhibits both serine proteases (trypsin Kd=124 nM) and voltage-gated potassium channels rKv1.1/KCNA1 (IC(50)=0.9 nM). The activity on the Kv1.1/KCNA1 is selective and reversible. The toxin presumably acts by blocking the channel pore in the open state. The protein is KappaPI-actitoxin-Ael3a of Anthopleura elegantissima (Green aggregating anemone).